The following is a 169-amino-acid chain: Crossover junction endodeoxyribonuclease RuvC (169 aa).

Catalysis depends on residues D11, E71, and D143. Residues D11, E71, and D143 each contribute to the Mg(2+) site.

The protein belongs to the RuvC family. As to quaternary structure, homodimer which binds Holliday junction (HJ) DNA. The HJ becomes 2-fold symmetrical on binding to RuvC with unstacked arms; it has a different conformation from HJ DNA in complex with RuvA. In the full resolvosome a probable DNA-RuvA(4)-RuvB(12)-RuvC(2) complex forms which resolves the HJ. Requires Mg(2+) as cofactor.

The protein localises to the cytoplasm. It carries out the reaction Endonucleolytic cleavage at a junction such as a reciprocal single-stranded crossover between two homologous DNA duplexes (Holliday junction).. Functionally, the RuvA-RuvB-RuvC complex processes Holliday junction (HJ) DNA during genetic recombination and DNA repair. Endonuclease that resolves HJ intermediates. Cleaves cruciform DNA by making single-stranded nicks across the HJ at symmetrical positions within the homologous arms, yielding a 5'-phosphate and a 3'-hydroxyl group; requires a central core of homology in the junction. The consensus cleavage sequence is 5'-(A/T)TT(C/G)-3'. Cleavage occurs on the 3'-side of the TT dinucleotide at the point of strand exchange. HJ branch migration catalyzed by RuvA-RuvB allows RuvC to scan DNA until it finds its consensus sequence, where it cleaves and resolves the cruciform DNA. This chain is Crossover junction endodeoxyribonuclease RuvC, found in Bartonella quintana (strain Toulouse) (Rochalimaea quintana).